A 318-amino-acid polypeptide reads, in one-letter code: Biotin synthase (318 aa).

Positions 46–272 (DGVDVEQLNN…RSVVKISGGR (227 aa)) constitute a Radical SAM core domain. [4Fe-4S] cluster contacts are provided by Cys61, Cys65, and Cys68. [2Fe-2S] cluster is bound by residues Cys105, Cys138, Cys197, and Lys267.

It belongs to the radical SAM superfamily. Biotin synthase family. As to quaternary structure, homodimer. The cofactor is [4Fe-4S] cluster. Requires [2Fe-2S] cluster as cofactor.

The enzyme catalyses (4R,5S)-dethiobiotin + (sulfur carrier)-SH + 2 reduced [2Fe-2S]-[ferredoxin] + 2 S-adenosyl-L-methionine = (sulfur carrier)-H + biotin + 2 5'-deoxyadenosine + 2 L-methionine + 2 oxidized [2Fe-2S]-[ferredoxin]. It participates in cofactor biosynthesis; biotin biosynthesis; biotin from 7,8-diaminononanoate: step 2/2. Functionally, catalyzes the conversion of dethiobiotin (DTB) to biotin by the insertion of a sulfur atom into dethiobiotin via a radical-based mechanism. In Cenarchaeum symbiosum (strain A), this protein is Biotin synthase.